A 175-amino-acid chain; its full sequence is UPF0398 protein SGO_0588 (175 aa).

It belongs to the UPF0398 family.

The polypeptide is UPF0398 protein SGO_0588 (Streptococcus gordonii (strain Challis / ATCC 35105 / BCRC 15272 / CH1 / DL1 / V288)).